The chain runs to 274 residues: tRNA-cytidine(32) 2-sulfurtransferase (274 aa).

The PP-loop motif signature appears at serine 40–serine 45. [4Fe-4S] cluster contacts are provided by cysteine 115, cysteine 118, and cysteine 206.

This sequence belongs to the TtcA family. In terms of assembly, homodimer. It depends on Mg(2+) as a cofactor. The cofactor is [4Fe-4S] cluster.

The protein localises to the cytoplasm. It catalyses the reaction cytidine(32) in tRNA + S-sulfanyl-L-cysteinyl-[cysteine desulfurase] + AH2 + ATP = 2-thiocytidine(32) in tRNA + L-cysteinyl-[cysteine desulfurase] + A + AMP + diphosphate + H(+). The protein operates within tRNA modification. Catalyzes the ATP-dependent 2-thiolation of cytidine in position 32 of tRNA, to form 2-thiocytidine (s(2)C32). The sulfur atoms are provided by the cysteine/cysteine desulfurase (IscS) system. In Pseudomonas fluorescens (strain SBW25), this protein is tRNA-cytidine(32) 2-sulfurtransferase.